We begin with the raw amino-acid sequence, 223 residues long: Ribose-5-phosphate isomerase A (223 aa).

Substrate-binding positions include 28–31 (TGTT), 81–84 (DSAD), and 94–97 (KGGG). The Proton acceptor role is filled by E103. K121 is a binding site for substrate.

This sequence belongs to the ribose 5-phosphate isomerase family. As to quaternary structure, homodimer.

The catalysed reaction is aldehydo-D-ribose 5-phosphate = D-ribulose 5-phosphate. The protein operates within carbohydrate degradation; pentose phosphate pathway; D-ribose 5-phosphate from D-ribulose 5-phosphate (non-oxidative stage): step 1/1. In terms of biological role, catalyzes the reversible conversion of ribose-5-phosphate to ribulose 5-phosphate. The polypeptide is Ribose-5-phosphate isomerase A (Buchnera aphidicola subsp. Acyrthosiphon pisum (strain 5A)).